A 156-amino-acid polypeptide reads, in one-letter code: Small ribosomal subunit protein uS7 (156 aa).

The protein belongs to the universal ribosomal protein uS7 family. In terms of assembly, part of the 30S ribosomal subunit. Contacts proteins S9 and S11.

Its function is as follows. One of the primary rRNA binding proteins, it binds directly to 16S rRNA where it nucleates assembly of the head domain of the 30S subunit. Is located at the subunit interface close to the decoding center, probably blocks exit of the E-site tRNA. This chain is Small ribosomal subunit protein uS7, found in Novosphingobium aromaticivorans (strain ATCC 700278 / DSM 12444 / CCUG 56034 / CIP 105152 / NBRC 16084 / F199).